Consider the following 664-residue polypeptide: SPARC-like protein 1 (664 aa).

An N-terminal signal peptide occupies residues 1-16 (MKTGLFFLCLLGTAAA). Residues 25 to 34 (SDHSKPTAET) form an O-glycosylated at one additional site region. The tract at residues 28 to 360 (SKPTAETVAP…DGPRHSASDD (333 aa)) is disordered. Thr31 and Thr40 each carry an O-linked (GalNAc...) threonine glycan. A glycan (O-linked (GalNAc...) serine) is linked at Ser44. A compositionally biased stretch (basic and acidic residues) spans 62 to 84 (DDSHHKAEKSSVLKSKEESHEQS). Ser76, Ser84, and Ser92 each carry phosphoserine. Polar residues predominate over residues 85-94 (AEQGKSSSQE). A compositionally biased stretch (basic and acidic residues) spans 96 to 105 (GLKDQEDSDG). Residue Thr116 is glycosylated (O-linked (GalNAc...) threonine). Positions 120-136 (LDIKEDMSEPQEKKLSE) are enriched in basic and acidic residues. Polar residues predominate over residues 146 to 156 (SSFTDSNQQES). Asn169 is a glycosylation site (N-linked (GlcNAc...) asparagine). Positions 170–180 (YSHHQLNRSSK) are enriched in basic residues. The residue at position 171 (Ser171) is a Phosphoserine. N-linked (GlcNAc...) asparagine glycans are attached at residues Asn176 and Asn196. The segment covering 188-199 (QGNQEQDPNISN) has biased composition (polar residues). Residues 216 to 235 (DNQERKTELPREHANSKQEE) show a composition bias toward basic and acidic residues. 2 stretches are compositionally biased toward acidic residues: residues 236-248 (DNTQ…EESD) and 259-280 (DEFD…EEEN). A Phosphoserine modification is found at Ser272. The N-linked (GlcNAc...) asparagine glycan is linked to Asn280. A compositionally biased stretch (basic and acidic residues) spans 306–316 (SNHKETEEKTV). A glycan (O-linked (GalNAc...) threonine) is linked at Thr331. Acidic residues predominate over residues 339–349 (DDGDDDGDDGG). Phosphoserine is present on residues Ser358 and Ser365. Positions 388–426 (EKVHENENIGTTEPGEHQEAKKAENSSNEEETSSEGNMR) are disordered. Thr398 carries an O-linked (GalNAc...) threonine glycan. The segment covering 401–411 (PGEHQEAKKAE) has biased composition (basic and acidic residues). Asn412 is a glycosylation site (N-linked (GlcNAc...) asparagine). Ser420 bears the Phosphoserine mark. The 23-residue stretch at 432–454 (SCMSFQCKRGHICKADQQGKPHC) folds into the Follistatin-like domain. Intrachain disulfides connect Cys433-Cys444, Cys438-Cys454, Cys456-Cys490, Cys462-Cys483, Cys472-Cys509, Cys515-Cys626, and Cys634-Cys650. The Kazal-like domain occupies 450–511 (GKPHCVCQDP…QLDYFGACKS (62 aa)). Residue Asn476 is glycosylated (N-linked (GlcNAc...) asparagine). One can recognise an EF-hand domain in the interval 622–657 (PMEHCITRFFEECDPNKDKHITLKEWGHCFGIKEED). Residues Asp635, Asn637, Asp639, His641, and Glu646 each coordinate Ca(2+).

This sequence belongs to the SPARC family. N- and O-glycosylated. O-glycosylated with a core 1 or possibly core 8 glycan. Highly expressed in lymph node, brain, heart, lung, skeletal muscle, ovary, small intestine, and colon, with lower levels in placenta, pancreas, testis, spleen, and thymus, and no expression in kidney, liver, and peripheral blood leukocytes.

It localises to the secreted. It is found in the extracellular space. The protein resides in the extracellular matrix. This is SPARC-like protein 1 (SPARCL1) from Homo sapiens (Human).